The sequence spans 324 residues: Anthranilate phosphoribosyltransferase (324 aa).

Residues glycine 72, 75 to 76, threonine 80, 82 to 85, 99 to 107, and serine 111 each bind 5-phospho-alpha-D-ribose 1-diphosphate; these read GD, NVST, and KHGNVSVTS. Glycine 72 provides a ligand contact to anthranilate. Serine 84 contributes to the Mg(2+) binding site. Residue asparagine 102 coordinates anthranilate. Residue arginine 157 participates in anthranilate binding. Mg(2+) is bound by residues aspartate 215 and glutamate 216.

This sequence belongs to the anthranilate phosphoribosyltransferase family. In terms of assembly, homodimer. Mg(2+) serves as cofactor.

It catalyses the reaction N-(5-phospho-beta-D-ribosyl)anthranilate + diphosphate = 5-phospho-alpha-D-ribose 1-diphosphate + anthranilate. The protein operates within amino-acid biosynthesis; L-tryptophan biosynthesis; L-tryptophan from chorismate: step 2/5. Its function is as follows. Catalyzes the transfer of the phosphoribosyl group of 5-phosphorylribose-1-pyrophosphate (PRPP) to anthranilate to yield N-(5'-phosphoribosyl)-anthranilate (PRA). The chain is Anthranilate phosphoribosyltransferase from Pyrococcus furiosus (strain ATCC 43587 / DSM 3638 / JCM 8422 / Vc1).